A 156-amino-acid chain; its full sequence is Small ribosomal subunit protein uS7 (156 aa).

The protein belongs to the universal ribosomal protein uS7 family. Part of the 30S ribosomal subunit. Contacts proteins S9 and S11.

One of the primary rRNA binding proteins, it binds directly to 16S rRNA where it nucleates assembly of the head domain of the 30S subunit. Is located at the subunit interface close to the decoding center, probably blocks exit of the E-site tRNA. This is Small ribosomal subunit protein uS7 from Bordetella petrii (strain ATCC BAA-461 / DSM 12804 / CCUG 43448).